The sequence spans 447 residues: Na(+)-translocating NADH-quinone reductase subunit A (447 aa).

The protein belongs to the NqrA family. Composed of six subunits; NqrA, NqrB, NqrC, NqrD, NqrE and NqrF.

The enzyme catalyses a ubiquinone + n Na(+)(in) + NADH + H(+) = a ubiquinol + n Na(+)(out) + NAD(+). In terms of biological role, NQR complex catalyzes the reduction of ubiquinone-1 to ubiquinol by two successive reactions, coupled with the transport of Na(+) ions from the cytoplasm to the periplasm. NqrA to NqrE are probably involved in the second step, the conversion of ubisemiquinone to ubiquinol. In Yersinia pestis, this protein is Na(+)-translocating NADH-quinone reductase subunit A.